The sequence spans 248 residues: 1-(5-phosphoribosyl)-5-[(5-phosphoribosylamino)methylideneamino] imidazole-4-carboxamide isomerase (248 aa).

D11 acts as the Proton acceptor in catalysis. Catalysis depends on D132, which acts as the Proton donor.

It belongs to the HisA/HisF family.

The protein localises to the cytoplasm. The catalysed reaction is 1-(5-phospho-beta-D-ribosyl)-5-[(5-phospho-beta-D-ribosylamino)methylideneamino]imidazole-4-carboxamide = 5-[(5-phospho-1-deoxy-D-ribulos-1-ylimino)methylamino]-1-(5-phospho-beta-D-ribosyl)imidazole-4-carboxamide. It participates in amino-acid biosynthesis; L-histidine biosynthesis; L-histidine from 5-phospho-alpha-D-ribose 1-diphosphate: step 4/9. The polypeptide is 1-(5-phosphoribosyl)-5-[(5-phosphoribosylamino)methylideneamino] imidazole-4-carboxamide isomerase (Bradyrhizobium diazoefficiens (strain JCM 10833 / BCRC 13528 / IAM 13628 / NBRC 14792 / USDA 110)).